The following is a 1367-amino-acid chain: Mediator of RNA polymerase II transcription subunit 23 (1367 aa).

Residues 1343-1367 are disordered; the sequence is PPQALSSGSPAPQANQVPTALPVTQ. Residues 1346 to 1367 show a composition bias toward polar residues; sequence ALSSGSPAPQANQVPTALPVTQ.

Belongs to the Mediator complex subunit 23 family. In terms of assembly, component of the Mediator complex, which is composed of MED1, MED4, MED6, MED7, MED8, MED9, MED10, MED11, MED12, MED13, MED13L, MED14, MED15, MED16, MED17, MED18, MED19, MED20, MED21, MED22, MED23, MED24, MED25, MED26, MED27, MED29, MED30, MED31, CCNC, CDK8 and CDC2L6/CDK11. The MED12, MED13, CCNC and CDK8 subunits form a distinct module termed the CDK8 module. Mediator containing the CDK8 module is less active than Mediator lacking this module in supporting transcriptional activation. Individual preparations of the Mediator complex lacking one or more distinct subunits have been variously termed ARC, CRSP, DRIP, PC2, SMCC and TRAP. Interacts with CDK8, CEBPB, CTNNB1, ELK1 and GLI3. Interacts with the adenovirus E1A protein.

It is found in the nucleus. Its function is as follows. Component of the Mediator complex, a coactivator involved in the regulated transcription of nearly all RNA polymerase II-dependent genes. Mediator functions as a bridge to convey information from gene-specific regulatory proteins to the basal RNA polymerase II transcription machinery. Mediator is recruited to promoters by direct interactions with regulatory proteins and serves as a scaffold for the assembly of a functional pre-initiation complex with RNA polymerase II and the general transcription factors. Also required for transcriptional activation subsequent to the assembly of the pre-initiation complex. Required for transcriptional activation by adenovirus E1A protein. Required for ELK1-dependent transcriptional activation in response to activated Ras signaling. In Rattus norvegicus (Rat), this protein is Mediator of RNA polymerase II transcription subunit 23 (Med23).